The sequence spans 162 residues: Caveolin-2 (162 aa).

At 1–86 the chain is on the cytoplasmic side; that stretch reads MGLETEKADV…FEISKYVIYK (86 aa). At Tyr19 the chain carries Phosphotyrosine; by SRC. Residues Ser20 and Ser23 each carry the phosphoserine modification. Tyr27 is subject to Phosphotyrosine; by SRC. Position 36 is a phosphoserine (Ser36). The segment at residues 87–107 is an intramembrane region (helical); that stretch reads FLTVFLAIPLAFTAGILFATL. Over 108–162 the chain is Cytoplasmic; it reads SCLHIWIIMPFVKTCLMVLPSVQTIWRSVTDVIIAPLCTSIGRICSSVSLQVSHD.

Belongs to the caveolin family. In terms of assembly, monomer or homodimer. Interacts with CAV1; the interaction forms a stable heterooligomeric complex that is required for targeting to lipid rafts and for caveolae formation. Tyrosine phosphorylated forms do not form heterooligomers with the Tyr-19-phosphorylated form existing as a monomer or dimer, and the Tyr-27-form as a monomer only. Interacts (tyrosine phosphorylated form) with the SH2 domain-containing proteins, RASA1, NCK1 and SRC. Interacts (tyrosine phosphorylated form) with INSR, the interaction (Tyr-27-phosphorylated form) is increased on insulin stimulation. Interacts (Tyr-19 phosphorylated form) with MAPK1 (phosphorylated form); the interaction, promoted by insulin, leads to nuclear location and MAPK1 activation. Interacts with STAT3; the interaction is increased on insulin-induced tyrosine phosphorylation leading to STAT activation. In terms of processing, phosphorylated on serine and tyrosine residues. CAV1 promotes phosphorylation on Ser-23 which then targets the complex to the plasma membrane, lipid rafts and caveolae. Phosphorylation on Ser-36 appears to modulate mitosis in endothelial cells. Phosphorylation on both Tyr-19 and Tyr-27 is required for insulin-induced 'Ser-727' phosphorylation of STAT3 and its activation. Phosphorylation on Tyr-19 is required for insulin-induced phosphorylation of MAPK1 and DNA binding of STAT3. Tyrosine phosphorylation is induced by both EGF and insulin (By. similarity).

It is found in the nucleus. The protein localises to the cytoplasm. The protein resides in the golgi apparatus membrane. Its subcellular location is the cell membrane. It localises to the membrane. It is found in the caveola. May act as a scaffolding protein within caveolar membranes. Interacts directly with G-protein alpha subunits and can functionally regulate their activity. Acts as an accessory protein in conjunction with CAV1 in targeting to lipid rafts and driving caveolae formation. The Ser-36 phosphorylated form has a role in modulating mitosis in endothelial cells. Positive regulator of cellular mitogenesis of the MAPK signaling pathway. Required for the insulin-stimulated nuclear translocation and activation of MAPK1 and STAT3, and the subsequent regulation of cell cycle progression. This is Caveolin-2 (CAV2) from Atelerix albiventris (Middle-African hedgehog).